The chain runs to 478 residues: Transposon Ty1-H Gag polyprotein (478 aa).

Composition is skewed to polar residues over residues 1–10 (MESQQLSNYP), 48–60 (TKAN…TPAS), and 127–152 (QSQF…GNTF). Disordered regions lie at residues 1-84 (MESQ…QNGP), 126-174 (PQSQ…PPPM), and 390-478 (GSRN…PETY). The segment covering 153–165 (TDSSSADSDMTST) has biased composition (low complexity). The RNA-binding stretch occupies residues 337-439 (NNGIHINNKV…NSKSKTARAH (103 aa)). The segment covering 440–456 (NVSTSNNSPSTDNDSIS) has biased composition (low complexity). A compositionally biased stretch (polar residues) spans 457-466 (KSTTEPIQLN). Residues 467–478 (NKHDLHLRPETY) show a composition bias toward basic and acidic residues.

Homotrimer.

Its subcellular location is the cytoplasm. Its function is as follows. Capsid protein (CA) is the structural component of the virus-like particle (VLP), forming the shell that encapsulates the retrotransposons dimeric RNA genome. The particles are assembled from trimer-clustered units and there are holes in the capsid shells that allow for the diffusion of macromolecules. CA also has nucleocapsid-like chaperone activity, promoting primer tRNA(i)-Met annealing to the multipartite primer-binding site (PBS), dimerization of Ty1 RNA and initiation of reverse transcription. The protein is Transposon Ty1-H Gag polyprotein (TY1A-H) of Saccharomyces cerevisiae (strain ATCC 204508 / S288c) (Baker's yeast).